Reading from the N-terminus, the 201-residue chain is IMP cyclohydrolase (201 aa).

The protein belongs to the archaeal IMP cyclohydrolase family.

The catalysed reaction is IMP + H2O = 5-formamido-1-(5-phospho-D-ribosyl)imidazole-4-carboxamide. It functions in the pathway purine metabolism; IMP biosynthesis via de novo pathway; IMP from 5-formamido-1-(5-phospho-D-ribosyl)imidazole-4-carboxamide: step 1/1. In terms of biological role, catalyzes the cyclization of 5-formylamidoimidazole-4-carboxamide ribonucleotide to IMP. This Methanococcus maripaludis (strain C6 / ATCC BAA-1332) protein is IMP cyclohydrolase.